The sequence spans 344 residues: Anthranilate phosphoribosyltransferase (344 aa).

Residues Gly84, 87 to 88 (GD), Thr92, 94 to 97 (NIST), 112 to 120 (KHGGRSVSS), and Ser124 each bind 5-phospho-alpha-D-ribose 1-diphosphate. Gly84 is a binding site for anthranilate. Residue Ser96 participates in Mg(2+) binding. Arg170 is a binding site for anthranilate. Asp229 and Glu230 together coordinate Mg(2+).

Belongs to the anthranilate phosphoribosyltransferase family. Homodimer. Mg(2+) is required as a cofactor.

It carries out the reaction N-(5-phospho-beta-D-ribosyl)anthranilate + diphosphate = 5-phospho-alpha-D-ribose 1-diphosphate + anthranilate. The protein operates within amino-acid biosynthesis; L-tryptophan biosynthesis; L-tryptophan from chorismate: step 2/5. Functionally, catalyzes the transfer of the phosphoribosyl group of 5-phosphorylribose-1-pyrophosphate (PRPP) to anthranilate to yield N-(5'-phosphoribosyl)-anthranilate (PRA). In Janthinobacterium sp. (strain Marseille) (Minibacterium massiliensis), this protein is Anthranilate phosphoribosyltransferase.